A 270-amino-acid polypeptide reads, in one-letter code: Replication protein A 32 kDa subunit (270 aa).

M1 carries the N-acetylmethionine modification. 2 positions are modified to phosphoserine; by PRKDC: S4 and S8. T21 bears the Phosphothreonine; by PRKDC mark. A disordered region spans residues 22–41; the sequence is QSPGGFGSPTPSQAEKKSRA. Residue S23 is modified to Phosphoserine; by CDK2. Position 29 is a phosphoserine; by CDK1 (S29). Residue S33 is modified to Phosphoserine; by PRKDC. Glycyl lysine isopeptide (Lys-Gly) (interchain with G-Cter in ubiquitin) cross-links involve residues K37 and K38. The OB DNA-binding region spans 74–148; it reads VTIVGIIRHA…KSLVAFKIIP (75 aa). The tract at residues 187 to 270 is interaction with RAD52, TIPIN, UNG and XPA; it reads GMGEPGNFSG…DDHFKSTDAE (84 aa).

It belongs to the replication factor A protein 2 family. As to quaternary structure, component of the replication protein A complex (RPA/RP-A), a heterotrimeric complex composed of RPA1, RPA2 and RPA3. Interacts with PRPF19; the PRP19-CDC5L complex is recruited to the sites of DNA repair where it ubiquitinates the replication protein A complex (RPA). Interacts with SERTAD3. Interacts with TIPIN. Interacts with TIMELESS. Interacts with PPP4R2; the interaction is direct, DNA damage-dependent and mediates the recruitment of the PP4 catalytic subunit PPP4C. Interacts (hyperphosphorylated) with RAD51. Interacts with SMARCAL1; the interaction is direct and mediates the recruitment to the RPA complex of SMARCAL1. Interacts with RAD52 and XPA; those interactions are direct and associate RAD52 and XPA to the RPA complex. Interacts with FBH1. Interacts with ETAA1; the interaction is direct and promotes ETAA1 recruitment at stalled replication forks. Interacts with DDI2. Interacts (in unphosphorylated form via N-terminus) with EIF4EBP3; the interaction enhances EIF4EBP3-mediated inhibition of EIF4E-mediated mRNA nuclear export. Interacts with nuclear UNG (isoform 2); this interaction mediates UNG recruitment to RPA-coated single-stranded DNA at stalled replication forks. In terms of processing, differentially phosphorylated throughout the cell cycle, becoming phosphorylated at the G1-S transition and dephosphorylated in late mitosis. Mainly phosphorylated at Ser-23 and Ser-29, by cyclin A-CDK2 and cyclin B-CDK1, respectively during DNA replication and mitosis. Dephosphorylation may require the serine/threonine-protein phosphatase 4. Phosphorylation at Ser-23 and Ser-29 is a prerequisite for further phosphorylation. Becomes hyperphosphorylated on additional residues including Ser-4, Ser-8, Thr-21 and Ser-33 in response to DNA damage. Hyperphosphorylation is mediated by ATM, ATR and PRKDC. Primarily recruited to DNA repair nuclear foci as a hypophosphorylated form it undergoes subsequent hyperphosphorylation, catalyzed by ATR. Hyperphosphorylation is required for RAD51 recruitment to chromatin and efficient DNA repair. Phosphorylation at Thr-21 depends upon RFWD3 presence. DNA damage-induced 'Lys-63'-linked polyubiquitination by PRPF19 mediates ATRIP recruitment to the RPA complex at sites of DNA damage and activation of ATR. Ubiquitinated by RFWD3 at stalled replication forks in response to DNA damage: ubiquitination by RFWD3 does not lead to degradation by the proteasome and promotes removal of the RPA complex from stalled replication forks, promoting homologous recombination.

The protein localises to the nucleus. It localises to the PML body. In terms of biological role, as part of the heterotrimeric replication protein A complex (RPA/RP-A), binds and stabilizes single-stranded DNA intermediates, that form during DNA replication or upon DNA stress. It prevents their reannealing and in parallel, recruits and activates different proteins and complexes involved in DNA metabolism. Thereby, it plays an essential role both in DNA replication and the cellular response to DNA damage. In the cellular response to DNA damage, the RPA complex controls DNA repair and DNA damage checkpoint activation. Through recruitment of ATRIP activates the ATR kinase a master regulator of the DNA damage response. It is required for the recruitment of the DNA double-strand break repair factors RAD51 and RAD52 to chromatin in response to DNA damage. Also recruits to sites of DNA damage proteins like XPA and XPG that are involved in nucleotide excision repair and is required for this mechanism of DNA repair. Also plays a role in base excision repair (BER) probably through interaction with UNG. Also recruits SMARCAL1/HARP, which is involved in replication fork restart, to sites of DNA damage. May also play a role in telomere maintenance. The polypeptide is Replication protein A 32 kDa subunit (Rpa2) (Rattus norvegicus (Rat)).